A 520-amino-acid polypeptide reads, in one-letter code: Maturase K (520 aa).

Belongs to the intron maturase 2 family. MatK subfamily.

The protein localises to the plastid. It is found in the chloroplast. Functionally, usually encoded in the trnK tRNA gene intron. Probably assists in splicing its own and other chloroplast group II introns. The protein is Maturase K of Liriope muscari (Big blue lilyturf).